The chain runs to 376 residues: Erythronate-4-phosphate dehydrogenase (376 aa).

Residues serine 45 and threonine 67 each contribute to the substrate site. Residues aspartate 147, 209-211 (ASR), and aspartate 235 each bind NAD(+). Residue arginine 211 is part of the active site. Glutamate 240 is a catalytic residue. Residue histidine 257 is the Proton donor of the active site. Glycine 260 is a binding site for NAD(+). Substrate is bound at residue tyrosine 261.

It belongs to the D-isomer specific 2-hydroxyacid dehydrogenase family. PdxB subfamily. As to quaternary structure, homodimer.

The protein resides in the cytoplasm. It catalyses the reaction 4-phospho-D-erythronate + NAD(+) = (R)-3-hydroxy-2-oxo-4-phosphooxybutanoate + NADH + H(+). The protein operates within cofactor biosynthesis; pyridoxine 5'-phosphate biosynthesis; pyridoxine 5'-phosphate from D-erythrose 4-phosphate: step 2/5. Functionally, catalyzes the oxidation of erythronate-4-phosphate to 3-hydroxy-2-oxo-4-phosphonooxybutanoate. The sequence is that of Erythronate-4-phosphate dehydrogenase from Aeromonas hydrophila subsp. hydrophila (strain ATCC 7966 / DSM 30187 / BCRC 13018 / CCUG 14551 / JCM 1027 / KCTC 2358 / NCIMB 9240 / NCTC 8049).